The primary structure comprises 422 residues: Enolase (422 aa).

Gln-161 lines the (2R)-2-phosphoglycerate pocket. The active-site Proton donor is the Glu-203. Mg(2+) is bound by residues Asp-240, Glu-283, and Asp-310. Residues Lys-335, Arg-364, Ser-365, and Lys-386 each coordinate (2R)-2-phosphoglycerate. Residue Lys-335 is the Proton acceptor of the active site.

This sequence belongs to the enolase family. Mg(2+) serves as cofactor.

It is found in the cytoplasm. The protein localises to the secreted. It localises to the cell surface. It catalyses the reaction (2R)-2-phosphoglycerate = phosphoenolpyruvate + H2O. The protein operates within carbohydrate degradation; glycolysis; pyruvate from D-glyceraldehyde 3-phosphate: step 4/5. In terms of biological role, catalyzes the reversible conversion of 2-phosphoglycerate (2-PG) into phosphoenolpyruvate (PEP). It is essential for the degradation of carbohydrates via glycolysis. This is Enolase from Deinococcus radiodurans (strain ATCC 13939 / DSM 20539 / JCM 16871 / CCUG 27074 / LMG 4051 / NBRC 15346 / NCIMB 9279 / VKM B-1422 / R1).